The chain runs to 82 residues: MPKKTEQPVSFESSLNELEKIVTRLESGELPLDDALNEFEHGIQLARQGQQKLQQAEQRVQILLSDDPDAPLSPFTPDNDTL.

Belongs to the XseB family. Heterooligomer composed of large and small subunits.

Its subcellular location is the cytoplasm. It carries out the reaction Exonucleolytic cleavage in either 5'- to 3'- or 3'- to 5'-direction to yield nucleoside 5'-phosphates.. In terms of biological role, bidirectionally degrades single-stranded DNA into large acid-insoluble oligonucleotides, which are then degraded further into small acid-soluble oligonucleotides. This is Exodeoxyribonuclease 7 small subunit from Pectobacterium atrosepticum (strain SCRI 1043 / ATCC BAA-672) (Erwinia carotovora subsp. atroseptica).